The chain runs to 195 residues: HTH-type transcriptional regulator BetI (195 aa).

An HTH tetR-type domain is found at 8-68 (EIRRAQLIDA…ATMRHVLRDL (61 aa)). Positions 31–50 (TLASVAQRANISTGIVSHYF) form a DNA-binding region, H-T-H motif.

The protein operates within amine and polyamine biosynthesis; betaine biosynthesis via choline pathway [regulation]. Repressor involved in the biosynthesis of the osmoprotectant glycine betaine. It represses transcription of the choline transporter BetT and the genes of BetAB involved in the synthesis of glycine betaine. This is HTH-type transcriptional regulator BetI from Burkholderia thailandensis (strain ATCC 700388 / DSM 13276 / CCUG 48851 / CIP 106301 / E264).